The following is a 360-amino-acid chain: MNAPLGGIWLWLPLLLTWLSPEVSSSWWYMRATGGSSRVMCDNVPGLVSRQRQLCHRNPDVMRAIGLGVAEWTAECQHQFRQHRWNCNTLDRDHSLFGRVLLRSSRESAFVYAISSAGVVFAITRACSQGELKSCSCDPKKKGSSRDNKGTFDWGGCSDNIDYGIKFARAFVDAKERQGKDARALMNLHNNRAGRKAVKRFLKQECKCHGVSGSCTLRTCWLAMADFRKTGDYLWKKYSGAIQVVMNQDGTGFTVANKRFKKPTKNDLVYFENSPDYCIRDRDAGSLGTAGRVCNLTSRGMDSCEVMCCGRGYDTSRVTRMTKCECKFHWCCAVRCQDCLEALDVHTCKAPKSADWAAPT.

The N-terminal stretch at 1-25 (MNAPLGGIWLWLPLLLTWLSPEVSS) is a signal peptide. Disulfide bonds link Cys76-Cys87, Cys127-Cys135, Cys137-Cys157, Cys206-Cys220, Cys208-Cys215, Cys278-Cys309, Cys294-Cys304, Cys308-Cys348, Cys324-Cys339, Cys326-Cys336, and Cys331-Cys332. Residue Ser212 is the site of O-palmitoleoyl serine; by PORCN attachment. The N-linked (GlcNAc...) asparagine glycan is linked to Asn295.

This sequence belongs to the Wnt family. In terms of processing, palmitoleoylation is required for efficient binding to frizzled receptors. Depalmitoleoylation leads to Wnt signaling pathway inhibition.

The protein localises to the secreted. The protein resides in the extracellular space. It localises to the extracellular matrix. Functionally, ligand for members of the frizzled family of seven transmembrane receptors. Probable developmental protein. May be a signaling molecule which affects the development of discrete regions of tissues. Is likely to signal over only few cell diameters. The sequence is that of Protein Wnt-2 (WNT2) from Carollia perspicillata (Seba's short-tailed bat).